The chain runs to 297 residues: tRNA dimethylallyltransferase (297 aa).

ATP is bound at residue 15 to 22 (GPTASGKS). 17-22 (TASGKS) lines the substrate pocket. Interaction with substrate tRNA regions lie at residues 40–43 (DSMQ) and 164–168 (QRIVR).

Belongs to the IPP transferase family. In terms of assembly, monomer. Mg(2+) serves as cofactor.

It carries out the reaction adenosine(37) in tRNA + dimethylallyl diphosphate = N(6)-dimethylallyladenosine(37) in tRNA + diphosphate. Functionally, catalyzes the transfer of a dimethylallyl group onto the adenine at position 37 in tRNAs that read codons beginning with uridine, leading to the formation of N6-(dimethylallyl)adenosine (i(6)A). The sequence is that of tRNA dimethylallyltransferase from Rhizobium etli (strain CIAT 652).